We begin with the raw amino-acid sequence, 75 residues long: Large ribosomal subunit protein bL31 (75 aa).

This sequence belongs to the bacterial ribosomal protein bL31 family. Type A subfamily. As to quaternary structure, part of the 50S ribosomal subunit.

Its function is as follows. Binds the 23S rRNA. The polypeptide is Large ribosomal subunit protein bL31 (Pelodictyon phaeoclathratiforme (strain DSM 5477 / BU-1)).